A 425-amino-acid chain; its full sequence is Protein upregulated in glial subsets pugs-5 (425 aa).

Basic and acidic residues predominate over residues 355–373 (NNNDVEKSTQIEKKPEKQG). The segment at 355–407 (NNNDVEKSTQIEKKPEKQGPEIQEEVVEMETVKDEQPPKTSAVRFKENSPRLM) is disordered.

This chain is Protein upregulated in glial subsets pugs-5, found in Caenorhabditis elegans.